The sequence spans 89 residues: Small ribosomal subunit protein uS14A (89 aa).

It belongs to the universal ribosomal protein uS14 family. In terms of assembly, part of the 30S ribosomal subunit. Contacts proteins S3 and S10.

Its function is as follows. Binds 16S rRNA, required for the assembly of 30S particles and may also be responsible for determining the conformation of the 16S rRNA at the A site. The polypeptide is Small ribosomal subunit protein uS14A (Ligilactobacillus salivarius (strain UCC118) (Lactobacillus salivarius)).